Here is a 312-residue protein sequence, read N- to C-terminus: Cytochrome c biogenesis protein CcsA (312 aa).

Transmembrane regions (helical) follow at residues 9-29 (ILTH…LITF), 44-64 (GIIV…ISSG), 71-91 (LYES…IPYF), 111-131 (GFAT…VPAL), 143-163 (MILG…LLVI), 216-236 (VISL…VWAN), 251-271 (WAFI…NINL), and 277-297 (AIIA…VNLL).

This sequence belongs to the CcmF/CycK/Ccl1/NrfE/CcsA family. As to quaternary structure, may interact with Ccs1.

The protein localises to the plastid. It is found in the chloroplast thylakoid membrane. Functionally, required during biogenesis of c-type cytochromes (cytochrome c6 and cytochrome f) at the step of heme attachment. The protein is Cytochrome c biogenesis protein CcsA of Atropa belladonna (Belladonna).